A 637-amino-acid polypeptide reads, in one-letter code: uncharacterized protein (637 aa).

The zn(2)-C6 fungal-type DNA-binding region spans 7-34 (CDLCRLKKIKCSRGQPRCQTCTLFQADC). A C2H2-type; degenerate zinc finger spans residues 304–327 (SLCRTLCGQACLMAQQLNLHRKQS).

Its subcellular location is the nucleus. This is an uncharacterized protein from Schizosaccharomyces pombe (strain 972 / ATCC 24843) (Fission yeast).